We begin with the raw amino-acid sequence, 386 residues long: S-(hydroxymethyl)glutathione dehydrogenase (386 aa).

Position 2 is an N-acetylserine (S2). C49 provides a ligand contact to Zn(2+). Residue H50 participates in NAD(+) binding. Residues H71, E72, C101, C104, C107, C115, and C179 each contribute to the Zn(2+) site. NAD(+) is bound by residues 204 to 209, D228, 300 to 302, and 325 to 327; these read GCGTVG, IGV, and SAF.

It belongs to the zinc-containing alcohol dehydrogenase family. Class-III subfamily. Requires Zn(2+) as cofactor.

It is found in the cytoplasm. The protein localises to the mitochondrion. The enzyme catalyses a primary alcohol + NAD(+) = an aldehyde + NADH + H(+). It catalyses the reaction a secondary alcohol + NAD(+) = a ketone + NADH + H(+). The catalysed reaction is S-(hydroxymethyl)glutathione + NADP(+) = S-formylglutathione + NADPH + H(+). It carries out the reaction S-(hydroxymethyl)glutathione + NAD(+) = S-formylglutathione + NADH + H(+). The enzyme catalyses S-nitrosoglutathione + NADH + H(+) = S-(hydroxysulfenamide)glutathione + NAD(+). In terms of biological role, oxidizes long-chain alcohols and, in the presence of glutathione, is able to oxidize formaldehyde. Is responsible for yeast resistance to formaldehyde. Also acts as a S-nitroso-glutathione reductase by catalyzing the NADH-dependent reduction of S-nitrosoglutathione, thereby regulating protein S-nitrosylation. This Saccharomyces cerevisiae (strain ATCC 204508 / S288c) (Baker's yeast) protein is S-(hydroxymethyl)glutathione dehydrogenase (SFA1).